A 165-amino-acid polypeptide reads, in one-letter code: Phosphopantetheine adenylyltransferase (165 aa).

S11 is a substrate binding site. Residues 11–12 (SF) and H19 contribute to the ATP site. Positions 43, 76, and 90 each coordinate substrate. ATP-binding positions include 91-93 (GIR), E101, and 126-132 (FSFISSS).

The protein belongs to the bacterial CoaD family. As to quaternary structure, homohexamer. It depends on Mg(2+) as a cofactor.

It is found in the cytoplasm. It catalyses the reaction (R)-4'-phosphopantetheine + ATP + H(+) = 3'-dephospho-CoA + diphosphate. Its pathway is cofactor biosynthesis; coenzyme A biosynthesis; CoA from (R)-pantothenate: step 4/5. In terms of biological role, reversibly transfers an adenylyl group from ATP to 4'-phosphopantetheine, yielding dephospho-CoA (dPCoA) and pyrophosphate. The polypeptide is Phosphopantetheine adenylyltransferase (Latilactobacillus sakei subsp. sakei (strain 23K) (Lactobacillus sakei subsp. sakei)).